The chain runs to 718 residues: Ribonuclease J (718 aa).

The tract at residues 1–130 (MNDSRNRGRK…RGNRGGGRRN (130 aa)) is disordered. Low complexity-rich tracts occupy residues 55 to 91 (AAQGAQGSQDSQGSQNAQGSQNRESGNNNRNRSNNNR) and 100 to 118 (SGNANEGANNNSGNQNRQG). Positions 220, 222, 224, 225, 287, and 309 each coordinate Zn(2+). 510-514 (HTSGH) contacts substrate. H536 serves as a coordination point for Zn(2+).

It belongs to the metallo-beta-lactamase superfamily. RNA-metabolizing metallo-beta-lactamase-like family. Bacterial RNase J subfamily. Homodimer, may be a subunit of the RNA degradosome. Zn(2+) serves as cofactor.

Its subcellular location is the cytoplasm. An RNase that has 5'-3' exonuclease and possibly endoonuclease activity. Involved in maturation of rRNA and in some organisms also mRNA maturation and/or decay. This is Ribonuclease J from Corynebacterium glutamicum (strain ATCC 13032 / DSM 20300 / JCM 1318 / BCRC 11384 / CCUG 27702 / LMG 3730 / NBRC 12168 / NCIMB 10025 / NRRL B-2784 / 534).